The primary structure comprises 592 residues: Arginine--tRNA ligase (592 aa).

The 'HIGH' region motif lies at 134–144; it reads ANPTGPLHVGH.

Belongs to the class-I aminoacyl-tRNA synthetase family. Monomer.

The protein localises to the cytoplasm. The enzyme catalyses tRNA(Arg) + L-arginine + ATP = L-arginyl-tRNA(Arg) + AMP + diphosphate. The chain is Arginine--tRNA ligase from Coxiella burnetii (strain CbuG_Q212) (Coxiella burnetii (strain Q212)).